The chain runs to 749 residues: 5-methyltetrahydropteroyltriglutamate--homocysteine methyltransferase (749 aa).

5-methyltetrahydropteroyltri-L-glutamate-binding positions include 15-18 (RELK) and K114. L-homocysteine-binding positions include 425 to 427 (IGS) and E478. Residues 425 to 427 (IGS) and E478 contribute to the L-methionine site. A 5-methyltetrahydropteroyltri-L-glutamate-binding site is contributed by W555. Position 593 (D593) interacts with L-homocysteine. Position 593 (D593) interacts with L-methionine. E599 provides a ligand contact to 5-methyltetrahydropteroyltri-L-glutamate. Zn(2+) contacts are provided by H636, C638, and E660. Catalysis depends on H689, which acts as the Proton donor. C721 provides a ligand contact to Zn(2+).

The protein belongs to the vitamin-B12 independent methionine synthase family. The cofactor is Zn(2+).

The catalysed reaction is 5-methyltetrahydropteroyltri-L-glutamate + L-homocysteine = tetrahydropteroyltri-L-glutamate + L-methionine. The protein operates within amino-acid biosynthesis; L-methionine biosynthesis via de novo pathway; L-methionine from L-homocysteine (MetE route): step 1/1. Catalyzes the transfer of a methyl group from 5-methyltetrahydrofolate to homocysteine resulting in methionine formation. The polypeptide is 5-methyltetrahydropteroyltriglutamate--homocysteine methyltransferase (Streptococcus suis (strain 05ZYH33)).